Consider the following 210-residue polypeptide: Uracil phosphoribosyltransferase (210 aa).

Residues R78, R103, and 130–138 (DPMLATGGS) contribute to the 5-phospho-alpha-D-ribose 1-diphosphate site. Uracil-binding positions include I195 and 200–202 (GDA). D201 provides a ligand contact to 5-phospho-alpha-D-ribose 1-diphosphate.

This sequence belongs to the UPRTase family. Requires Mg(2+) as cofactor.

It catalyses the reaction UMP + diphosphate = 5-phospho-alpha-D-ribose 1-diphosphate + uracil. It participates in pyrimidine metabolism; UMP biosynthesis via salvage pathway; UMP from uracil: step 1/1. With respect to regulation, allosterically activated by GTP. Its function is as follows. Catalyzes the conversion of uracil and 5-phospho-alpha-D-ribose 1-diphosphate (PRPP) to UMP and diphosphate. In Leifsonia xyli subsp. xyli (strain CTCB07), this protein is Uracil phosphoribosyltransferase.